The primary structure comprises 602 residues: Potassium voltage-gated channel subfamily A member 5 (602 aa).

The segment at 1–107 (MEISLVPMEN…EDQAPQDSGS (107 aa)) is disordered. Positions 1–202 (MEISLVPMEN…FYQLGDEAME (202 aa)) are tetramerization domain. The Cytoplasmic portion of the chain corresponds to 1–238 (MEISLVPMEN…LIFEYPESSG (238 aa)). Over residues 66-78 (PLPPMPQELPQPR) the composition is skewed to pro residues. Phosphoserine; by CK2 and PKA is present on Ser81. Lys212 participates in a covalent cross-link: Glycyl lysine isopeptide (Lys-Gly) (interchain with G-Cter in SUMO). Residues 239–260 (SARAIAIVSVLVILISIITFCL) traverse the membrane as a helical segment. Residues 261–314 (ETLPEFRDERELLRHPPVPPQPPAPAPGANGSGSGVLSSGPTVAPLLPRTLADP) are Extracellular-facing. Positions 274–297 (RHPPVPPQPPAPAPGANGSGSGVL) are disordered. A compositionally biased stretch (pro residues) spans 276–286 (PPVPPQPPAPA). Asn290 carries N-linked (GlcNAc...) asparagine glycosylation. A helical membrane pass occupies residues 315–336 (FFIVETTCVIWFTFELLVRFFA). Cys337 carries S-palmitoyl cysteine lipidation. The Cytoplasmic segment spans residues 337–347 (CPSKAEFSRNI). A helical transmembrane segment spans residues 348 to 368 (MNIIDIVAIFPYFITLGTELA). The Extracellular segment spans residues 369 to 384 (EQQPGGGGQNGQQAMS). Residues 385–405 (LAILRVIRLVRVFRIFKLSRH) form a helical; Voltage-sensor membrane-spanning segment. Over 406–420 (SKGLQILGKTLQASM) the chain is Cytoplasmic. The tract at residues 407-420 (KGLQILGKTLQASM) is S4-S5 linker. The helical transmembrane segment at 421–442 (RELGLLIFFLFIGVILFSSAVY) threads the bilayer. At 443–456 (FAEADNQGSHFSSI) the chain is on the extracellular side. The helical intramembrane region spans 457 to 468 (PDAFWWAVVTMT). The Selectivity filter signature appears at 469–474 (TVGYGD). An intramembrane segment occupies 469-476 (TVGYGDMR). At 477–483 (PITVGGK) the chain is on the extracellular side. The helical transmembrane segment at 484 to 512 (IVGSLCAIAGVLTIALPVPVIVSNFNYFY) threads the bilayer. Topologically, residues 513–602 (HRETDHEEQA…CLDTSRETDL (90 aa)) are cytoplasmic. Lys525 is covalently cross-linked (Glycyl lysine isopeptide (Lys-Gly) (interchain with G-Cter in SUMO)). Phosphoserine; by PKA occurs at positions 535, 546, and 569. Positions 600-602 (TDL) match the PDZ-binding motif.

The protein belongs to the potassium channel family. A (Shaker) (TC 1.A.1.2) subfamily. Kv1.5/KCNA5 sub-subfamily. In terms of assembly, homotetramer and heterotetramer of potassium channel proteins. Interacts with DLG1, which enhances channel currents. Forms a ternary complex with DLG1 and CAV3. Interacts with KCNAB1. Interacts with UBE2I. Interacts with XIRP2; the interaction is required for normal action potential configuration in the heart. In terms of processing, glycosylated. Sumoylated on Lys-212, and Lys-525, preferentially with SUMO3. Sumoylation regulates the voltage sensitivity of the channel. In terms of tissue distribution, expressed in the heart (at protein level). Expressed in the brain and weakly expressed in the thymus, skeletal muscle and spleen.

Its subcellular location is the cell membrane. The enzyme catalyses K(+)(in) = K(+)(out). Voltage-gated potassium channel that mediates transmembrane potassium transport in excitable membranes. Forms tetrameric potassium-selective channels through which potassium ions pass in accordance with their electrochemical gradient. The channel alternates between opened and closed conformations in response to the voltage difference across the membrane. Can form functional homotetrameric channels and heterotetrameric channels that contain variable proportions of KCNA1, KCNA2, KCNA4, KCNA5, and possibly other family members as well; channel properties depend on the type of alpha subunits that are part of the channel. Channel properties are modulated by cytoplasmic beta subunits that regulate the subcellular location of the alpha subunits and promote rapid inactivation. Homotetrameric channels display rapid activation and slow inactivation. Required for normal electrical conduction including formation of the infranodal ventricular conduction system and normal action potential configuration, as a result of its interaction with XIRP2. May play a role in regulating the secretion of insulin in normal pancreatic islets. In terms of biological role, voltage-gated potassium channel that mediates transmembrane potassium transport in excitable membranes. Forms tetrameric potassium-selective channels through which potassium ions pass in accordance with their electrochemical gradient. The channel alternates between opened and closed conformations in response to the voltage difference across the membrane. Its function is as follows. Inactive. Inhibits expression of isoform 1 and isoform 2. This Mus musculus (Mouse) protein is Potassium voltage-gated channel subfamily A member 5 (Kcna5).